A 154-amino-acid polypeptide reads, in one-letter code: MVKAVCVLRGDSKITGIVNFEQESDSSPTTISWEISNHDADAKRGFHITPFGDNTNGCTSAGPHFNPHGKTHGNVTDENRHVGDMGNIETDCDGNSKGSIKDKLIKLIGPHSVIGRTVVIHAGTDDLGKGGNDESLKTGNAGPRPACGVIGVAN.

Cu cation contacts are provided by histidine 47 and histidine 64. Cysteine 58 and cysteine 147 are joined by a disulfide. The Zn(2+) site is built by histidine 64, histidine 72, histidine 81, and aspartate 84. Histidine 121 contacts Cu cation. Arginine 144 contacts substrate.

The protein belongs to the Cu-Zn superoxide dismutase family. As to quaternary structure, homodimer. The cofactor is Cu cation. Zn(2+) is required as a cofactor.

The protein resides in the cytoplasm. The catalysed reaction is 2 superoxide + 2 H(+) = H2O2 + O2. Destroys radicals which are normally produced within the cells and which are toxic to biological systems. The chain is Superoxide dismutase [Cu-Zn] (SOD1) from Pleurocordyceps sinensis (Polycephalomyces sinensis).